The primary structure comprises 1156 residues: Condensin-2 complex subunit G2 (1156 aa).

One copy of the HEAT repeat lies at 460–498; sequence MLPALKFCLHDNSEKVRVAFVDMLLKIKAVRAAKFWKIC. The disordered stretch occupies residues 587–611; the sequence is PNEDTEDEDDDEGDGEGIVRGDSEK. The span at 589–601 shows a compositional bias: acidic residues; that stretch reads EDTEDEDDDEGDG.

As to quaternary structure, component of the condensin-2 complex, which contains the smc2 and smc4 heterodimer, and three non SMC subunits that probably regulate the complex: ncaph2, ncapd3 and ncapg2.

Its subcellular location is the nucleus. Functionally, regulatory subunit of the condensin-2 complex, a complex which establishes mitotic chromosome architecture and is involved in physical rigidity of the chromatid axis. This Xenopus laevis (African clawed frog) protein is Condensin-2 complex subunit G2 (ncapg2).